Here is a 251-residue protein sequence, read N- to C-terminus: Diphthine synthase (251 aa).

S-adenosyl-L-methionine contacts are provided by residues leucine 9, aspartate 84, valine 87, 112-113, leucine 160, alanine 194, and histidine 219; that span reads SI.

The protein belongs to the diphthine synthase family. As to quaternary structure, homodimer.

The enzyme catalyses 2-[(3S)-amino-3-carboxypropyl]-L-histidyl-[translation elongation factor 2] + 3 S-adenosyl-L-methionine = diphthine-[translation elongation factor 2] + 3 S-adenosyl-L-homocysteine + 3 H(+). It functions in the pathway protein modification; peptidyl-diphthamide biosynthesis. S-adenosyl-L-methionine-dependent methyltransferase that catalyzes the trimethylation of the amino group of the modified target histidine residue in translation elongation factor 2 (EF-2), to form an intermediate called diphthine. The three successive methylation reactions represent the second step of diphthamide biosynthesis. The protein is Diphthine synthase of Archaeoglobus fulgidus (strain ATCC 49558 / DSM 4304 / JCM 9628 / NBRC 100126 / VC-16).